We begin with the raw amino-acid sequence, 380 residues long: Cytochrome b (380 aa).

Transmembrane regions (helical) follow at residues 34–54, 78–99, 114–134, and 179–199; these read FGSL…FLAM, WLLR…YMHI, WNIG…GYVL, and FFAF…VHLL. Heme b contacts are provided by H84 and H98. Heme b-binding residues include H183 and H197. Residue H202 participates in a ubiquinone binding. 4 helical membrane passes run 227-247, 289-309, 321-341, and 348-368; these read YKDV…ALFS, LGGV…PFVH, LAQV…WLGG, and YIFL…LLIP.

Belongs to the cytochrome b family. As to quaternary structure, the cytochrome bc1 complex contains 3 respiratory subunits (MT-CYB, CYC1 and UQCRFS1), 2 core proteins (UQCRC1 and UQCRC2) and probably 6 low-molecular weight proteins. Requires heme b as cofactor.

It is found in the mitochondrion inner membrane. Functionally, component of the ubiquinol-cytochrome c reductase complex (complex III or cytochrome b-c1 complex) that is part of the mitochondrial respiratory chain. The b-c1 complex mediates electron transfer from ubiquinol to cytochrome c. Contributes to the generation of a proton gradient across the mitochondrial membrane that is then used for ATP synthesis. The chain is Cytochrome b (MT-CYB) from Branchiostoma floridae (Florida lancelet).